The sequence spans 119 residues: Large ribosomal subunit protein uL18 (119 aa).

The protein belongs to the universal ribosomal protein uL18 family. In terms of assembly, part of the 50S ribosomal subunit; part of the 5S rRNA/L5/L18/L25 subcomplex. Contacts the 5S and 23S rRNAs.

This is one of the proteins that bind and probably mediate the attachment of the 5S RNA into the large ribosomal subunit, where it forms part of the central protuberance. The protein is Large ribosomal subunit protein uL18 of Nitrosomonas europaea (strain ATCC 19718 / CIP 103999 / KCTC 2705 / NBRC 14298).